We begin with the raw amino-acid sequence, 91 residues long: Large ribosomal subunit protein bL27 (91 aa).

The tract at residues 1–20 (MAHKKGVGSSKNGRDSNPKY) is disordered.

The protein belongs to the bacterial ribosomal protein bL27 family.

This chain is Large ribosomal subunit protein bL27, found in Deinococcus geothermalis (strain DSM 11300 / CIP 105573 / AG-3a).